Reading from the N-terminus, the 162-residue chain is MPLKKAVYPGSFDPITYGHIDIIERGLKVFDTVIVAVARNSEKNSLFNVEERIALIREVLGDNSRAKVDTFDGLLVDYVRKQGATVIIRGLRAVSDFEYEFQLAQMNRSITQEVETLFMMTSVPYSYLSSSIVKEVSSLNGPIDGLVPPLVKKALDAKFNRS.

A substrate-binding site is contributed by Ser-11. Residues 11-12 (SF) and His-19 contribute to the ATP site. Residues Lys-43, Leu-75, and Arg-89 each coordinate substrate. ATP is bound by residues 90–92 (GLR), Glu-100, and 125–131 (YSYLSSS).

The protein belongs to the bacterial CoaD family. Homohexamer. It depends on Mg(2+) as a cofactor.

Its subcellular location is the cytoplasm. It catalyses the reaction (R)-4'-phosphopantetheine + ATP + H(+) = 3'-dephospho-CoA + diphosphate. It participates in cofactor biosynthesis; coenzyme A biosynthesis; CoA from (R)-pantothenate: step 4/5. In terms of biological role, reversibly transfers an adenylyl group from ATP to 4'-phosphopantetheine, yielding dephospho-CoA (dPCoA) and pyrophosphate. This Geotalea uraniireducens (strain Rf4) (Geobacter uraniireducens) protein is Phosphopantetheine adenylyltransferase.